The sequence spans 494 residues: Zinc metalloproteinase/disintegrin (494 aa).

An N-terminal signal peptide occupies residues 1–20 (MIQVLLVTICLAVFPFQGSS). The propeptide occupies 21 to 193 (KTLKSGNVND…KKASHLVATS (173 aa)). Residues 201 to 396 (RYVQLVIVAD…HNPPCILNQA (196 aa)) enclose the Peptidase M12B domain. 3 disulfide bridges follow: Cys-311–Cys-391, Cys-351–Cys-375, and Cys-353–Cys-358. His-336 contacts Zn(2+). The active site involves Glu-337. The Zn(2+) site is built by His-340 and His-346. Positions 410–431 (ELLQNSVNPCYDPVTCQPKEKE) are excised as a propeptide. The Disintegrin domain maps to 417-478 (NPCYDPVTCQ…DCPRNPYKGE (62 aa)). Intrachain disulfides connect Cys-433-Cys-442, Cys-438-Cys-463, Cys-439-Cys-468, and Cys-451-Cys-470. The Cell attachment site signature appears at 455 to 457 (RGD). Positions 482–494 (MEWPAPAKGSVLM) are excised as a propeptide.

It belongs to the venom metalloproteinase (M12B) family. P-II subfamily. P-IIa sub-subfamily. In terms of assembly, monomer (disintegrin). Expressed by the venom gland.

The protein localises to the secreted. In terms of biological role, impairs hemostasis in the envenomed animal. Functionally, inhibits ADP-induced platelet aggregation (IC(50)=168 nM). Inhibits alpha-5/beta-1 (ITGA5/ITGB1) integrin and induces the expression of a ligand-induced binding site epitope on beta-1 integrin subunit. Has a direct chemotactic stimulus on human neutrophils in vitro. This Echis ocellatus (Ocellated saw-scaled viper) protein is Zinc metalloproteinase/disintegrin.